The sequence spans 496 residues: Putative zinc finger CCCH domain-containing protein 48 (496 aa).

2 disordered regions span residues 1–77 (MADS…QPVH) and 108–194 (MGAG…HPDD). Residues 143-156 (HLAEEEEEEEEEHY) are compositionally biased toward acidic residues. 3 consecutive C3H1-type zinc fingers follow at residues 377 to 406 (EHKTKLCAEYYSRGLGCPRGNTCKYAHGED), 439 to 467 (KYKTKLCKTFTSGGLCLFAANCRFAHGEV), and 469 to 496 (LGKKEPCWYFFSGQTCPRGDTCGFRHSY).

This is Putative zinc finger CCCH domain-containing protein 48 from Oryza sativa subsp. japonica (Rice).